We begin with the raw amino-acid sequence, 1086 residues long: 1,2-beta-oligoglucan phosphorylase (1086 aa).

D741 acts as the Proton donor in catalysis.

This sequence belongs to the glycosyl hydrolase 94 family. In terms of assembly, monomer.

The catalysed reaction is [(1-&gt;2)-beta-D-glucosyl](n) + phosphate = [(1-&gt;2)-beta-D-glucosyl](n-1) + alpha-D-glucose 1-phosphate. In terms of biological role, catalyzes the reversible phosphorolysis of beta-(1-&gt;2)-D-glucans. The minimum length of the substrate for the phosphorolytic reaction is 3 D-glucose units. This Listeria innocua serovar 6a (strain ATCC BAA-680 / CLIP 11262) protein is 1,2-beta-oligoglucan phosphorylase.